Reading from the N-terminus, the 330-residue chain is Fructose-1,6-bisphosphatase class 1 (330 aa).

Mg(2+)-binding residues include Glu84, Asp103, Leu105, and Asp106. Substrate is bound by residues 106–109 (DGSS), Asn196, and Lys262. Residue Glu268 participates in Mg(2+) binding.

It belongs to the FBPase class 1 family. In terms of assembly, homotetramer. Mg(2+) is required as a cofactor.

The protein localises to the cytoplasm. The catalysed reaction is beta-D-fructose 1,6-bisphosphate + H2O = beta-D-fructose 6-phosphate + phosphate. It participates in carbohydrate biosynthesis; gluconeogenesis. In Shewanella baltica (strain OS185), this protein is Fructose-1,6-bisphosphatase class 1.